The following is a 206-amino-acid chain: ATP-dependent Clp protease proteolytic subunit 1 (206 aa).

Serine 103 (nucleophile) is an active-site residue. Histidine 128 is an active-site residue.

The protein belongs to the peptidase S14 family. In terms of assembly, fourteen ClpP subunits assemble into 2 heptameric rings which stack back to back to give a disk-like structure with a central cavity, resembling the structure of eukaryotic proteasomes.

The protein resides in the cytoplasm. It carries out the reaction Hydrolysis of proteins to small peptides in the presence of ATP and magnesium. alpha-casein is the usual test substrate. In the absence of ATP, only oligopeptides shorter than five residues are hydrolyzed (such as succinyl-Leu-Tyr-|-NHMec, and Leu-Tyr-Leu-|-Tyr-Trp, in which cleavage of the -Tyr-|-Leu- and -Tyr-|-Trp bonds also occurs).. In terms of biological role, cleaves peptides in various proteins in a process that requires ATP hydrolysis. Has a chymotrypsin-like activity. Plays a major role in the degradation of misfolded proteins. This is ATP-dependent Clp protease proteolytic subunit 1 from Protochlamydia amoebophila (strain UWE25).